Here is a 270-residue protein sequence, read N- to C-terminus: Regulatory protein RecX (270 aa).

Belongs to the RecX family.

It localises to the cytoplasm. In terms of biological role, modulates RecA activity. The protein is Regulatory protein RecX of Bacillus cereus (strain B4264).